The following is a 365-amino-acid chain: Holliday junction branch migration complex subunit RuvB (365 aa).

Residues 1–10 show a composition bias toward polar residues; sequence MAIVSSNAAS. Residues 1–48 form a disordered region; that stretch reads MAIVSSNAASQRPRPDRGPDRVPNRVVDGARQAEDDRDPGRVGAKEDS. Composition is skewed to basic and acidic residues over residues 13 to 23 and 31 to 48; these read PRPDRGPDRVP and RQAEDDRDPGRVGAKEDS. The large ATPase domain (RuvB-L) stretch occupies residues 13-210; it reads PRPDRGPDRV…FGLIQRLEFY (198 aa). ATP is bound by residues Leu49, Arg50, Gly91, Lys94, Thr95, Thr96, Arg200, Tyr210, and Arg247. Mg(2+) is bound at residue Thr95. The segment at 211-282 is small ATPAse domain (RuvB-S); it reads GLEDLQAIVE…LVDEALTLHR (72 aa). A head domain (RuvB-H) region spans residues 285–365; it reads GRGLDASDRR…GWPYPQEQAA (81 aa). Residues Arg340 and Arg345 each coordinate DNA.

This sequence belongs to the RuvB family. Homohexamer. Forms an RuvA(8)-RuvB(12)-Holliday junction (HJ) complex. HJ DNA is sandwiched between 2 RuvA tetramers; dsDNA enters through RuvA and exits via RuvB. An RuvB hexamer assembles on each DNA strand where it exits the tetramer. Each RuvB hexamer is contacted by two RuvA subunits (via domain III) on 2 adjacent RuvB subunits; this complex drives branch migration. In the full resolvosome a probable DNA-RuvA(4)-RuvB(12)-RuvC(2) complex forms which resolves the HJ.

It localises to the cytoplasm. The catalysed reaction is ATP + H2O = ADP + phosphate + H(+). Functionally, the RuvA-RuvB-RuvC complex processes Holliday junction (HJ) DNA during genetic recombination and DNA repair, while the RuvA-RuvB complex plays an important role in the rescue of blocked DNA replication forks via replication fork reversal (RFR). RuvA specifically binds to HJ cruciform DNA, conferring on it an open structure. The RuvB hexamer acts as an ATP-dependent pump, pulling dsDNA into and through the RuvAB complex. RuvB forms 2 homohexamers on either side of HJ DNA bound by 1 or 2 RuvA tetramers; 4 subunits per hexamer contact DNA at a time. Coordinated motions by a converter formed by DNA-disengaged RuvB subunits stimulates ATP hydrolysis and nucleotide exchange. Immobilization of the converter enables RuvB to convert the ATP-contained energy into a lever motion, pulling 2 nucleotides of DNA out of the RuvA tetramer per ATP hydrolyzed, thus driving DNA branch migration. The RuvB motors rotate together with the DNA substrate, which together with the progressing nucleotide cycle form the mechanistic basis for DNA recombination by continuous HJ branch migration. Branch migration allows RuvC to scan DNA until it finds its consensus sequence, where it cleaves and resolves cruciform DNA. The chain is Holliday junction branch migration complex subunit RuvB from Synechococcus sp. (strain WH7803).